Here is a 198-residue protein sequence, read N- to C-terminus: Beta-crystallin A1-2 (198 aa).

An N-terminal arm region spans residues Met1–Pro13. Beta/gamma crystallin 'Greek key' domains lie at Trp14 to Cys53 and Gly54 to Cys100. The segment at Ser101 to Glu106 is connecting peptide. 2 consecutive Beta/gamma crystallin 'Greek key' domains span residues Ser107–Cys148 and Gly149–Gln197.

The protein belongs to the beta/gamma-crystallin family. Homo/heterodimer, or complexes of higher-order. The structure of beta-crystallin oligomers seems to be stabilized through interactions between the N-terminal arms. In terms of processing, the N-terminus is blocked.

Crystallins are the dominant structural components of the vertebrate eye lens. In Aquarana catesbeiana (American bullfrog), this protein is Beta-crystallin A1-2.